Here is a 449-residue protein sequence, read N- to C-terminus: UDP-N-acetylmuramoylalanine--D-glutamate ligase (449 aa).

Gly-118–Thr-124 contributes to the ATP binding site.

It belongs to the MurCDEF family.

It is found in the cytoplasm. The catalysed reaction is UDP-N-acetyl-alpha-D-muramoyl-L-alanine + D-glutamate + ATP = UDP-N-acetyl-alpha-D-muramoyl-L-alanyl-D-glutamate + ADP + phosphate + H(+). The protein operates within cell wall biogenesis; peptidoglycan biosynthesis. In terms of biological role, cell wall formation. Catalyzes the addition of glutamate to the nucleotide precursor UDP-N-acetylmuramoyl-L-alanine (UMA). In Staphylococcus aureus (strain MSSA476), this protein is UDP-N-acetylmuramoylalanine--D-glutamate ligase.